The chain runs to 546 residues: Glucose-6-phosphate isomerase (546 aa).

Catalysis depends on Glu-353, which acts as the Proton donor. Catalysis depends on residues His-384 and Lys-512.

Belongs to the GPI family.

It localises to the cytoplasm. It carries out the reaction alpha-D-glucose 6-phosphate = beta-D-fructose 6-phosphate. It participates in carbohydrate biosynthesis; gluconeogenesis. Its pathway is carbohydrate degradation; glycolysis; D-glyceraldehyde 3-phosphate and glycerone phosphate from D-glucose: step 2/4. Its function is as follows. Catalyzes the reversible isomerization of glucose-6-phosphate to fructose-6-phosphate. The protein is Glucose-6-phosphate isomerase of Actinobacillus pleuropneumoniae serotype 3 (strain JL03).